Here is a 521-residue protein sequence, read N- to C-terminus: Cytochrome P450 monooxygenase astF (521 aa).

Residues 14-34 (TMATFLLPVAIGTIILLFLYG) traverse the membrane as a helical segment. 4 N-linked (GlcNAc...) asparagine glycosylation sites follow: Asn-198, Asn-218, Asn-268, and Asn-281. Position 430 (Cys-430) interacts with heme.

Belongs to the cytochrome P450 family. Requires heme as cofactor.

Its subcellular location is the membrane. The protein operates within secondary metabolite biosynthesis; terpenoid biosynthesis. Its function is as follows. Cytochrome P450 monooxygenase; part of the gene cluster that mediates the biosynthesis of astellolides, drimane-type sesquiterpene esters that show antimicrobial, anti-inflammatory, and anti-tumor activities. The first step in astellolide biosynthesis is performed by the sesquiterpene cyclase astC that catalyzes the formation of drimanyl pyrophosphate from farnesyl pyrophosphate. Drimanyl pyrophosphate is then dephosphorylated by the sesquiterpene phosphatase astI to produce drimanyl monophosphate which is further dephosphorylated to drim-8-ene-11-ol by atsK. Drim-8-ene-11-ol is converted to confertifolin, probably by the cytochrome P450 monooxygenase astD and/or the dehydrogenase astE. The cytochrome P450 monooxygenases astB, astF and astJ then hydroxylate confertifolin at C6, C14, or C15 to form trihydroxy confertifolin. The nonribosomal peptide synthetase astA catalyzes ester bond formation between trihydroxy contifolin and benzoic acid (BA) or 4-hydroxy benzoic acid (4HBA), leading to the formation of dideacetyl astellolides A and B, respectively. Finally, the O-acetyltransferase astG converts dideacetyl astellolides A and B into deacetyl astellolides A and B. This chain is Cytochrome P450 monooxygenase astF, found in Aspergillus oryzae (strain ATCC 42149 / RIB 40) (Yellow koji mold).